Reading from the N-terminus, the 123-residue chain is Large ribosomal subunit protein uL18 (123 aa).

It belongs to the universal ribosomal protein uL18 family. Part of the 50S ribosomal subunit; part of the 5S rRNA/L5/L18/L25 subcomplex. Contacts the 5S and 23S rRNAs.

Its function is as follows. This is one of the proteins that bind and probably mediate the attachment of the 5S RNA into the large ribosomal subunit, where it forms part of the central protuberance. In Bifidobacterium animalis subsp. lactis (strain AD011), this protein is Large ribosomal subunit protein uL18.